The following is a 424-amino-acid chain: Galacturonokinase (424 aa).

Position 2 is an N-acetylserine (Ser-2). Residue 146–155 participates in ATP binding; that stretch reads DSSGLSSSAA. Catalysis depends on Asp-197, which acts as the Proton acceptor.

It belongs to the GHMP kinase family. Mg(2+) is required as a cofactor. The cofactor is Mn(2+). Requires Ca(2+) as cofactor. In terms of tissue distribution, expressed in roots, stems, leaves, flowers and young siliques. Higher expression in the elongating middle stem region than in the lower or upper stem region.

It catalyses the reaction D-galacturonate + ATP = 1-phospho-alpha-D-galacturonate + ADP + H(+). Inhibited by EDTA and ADP. Its function is as follows. Sugar-1-kinase with a strict substrate specificity for the alpha-anomeric configuration of D-galacturonic acid (D-GalA) and ATP. Involved in the biosynthesis of UDP-galacturonic acid (UDP-GalA) from the salvaged GalA that is released during growth-dependent cell wall restructuring. This chain is Galacturonokinase (GALAK), found in Arabidopsis thaliana (Mouse-ear cress).